The primary structure comprises 502 residues: Alpha-globin transcription factor CP2 (502 aa).

The Grh/CP2 DB domain occupies 61 to 300 (ENKILPFQYV…SPGFNSSHSS (240 aa)). Residues 133–395 (EHQQLEGWRW…VRPRLTIYVC (263 aa)) are DNA-binding. Disordered stretches follow at residues 238 to 268 (FKPKGADRKQKTDREKMEKRTPHEKEKYQPS) and 294 to 325 (FNSSHSSFSLGEGNGSPNHQPEPPPPVTDNLL). Positions 241 to 265 (KGADRKQKTDREKMEKRTPHEKEKY) are enriched in basic and acidic residues. Ser353 is subject to Phosphoserine.

The protein belongs to the grh/CP2 family. CP2 subfamily. In terms of assembly, binds to DNA as a dimer, isoform 3 does not bind to DNA or affect the binding of isoform 1 to DNA. Interacts with UBP1 and PIAS1, and is probably part of a complex containing TFCP2, UBP1 and PIAS1. Component of the SSP (stage selector protein) complex, which appears to be a heteromer of TFCP2 and 2 copies of NFE4. Ubiquitous. Expressed in brain, ovary, kidney, thymus, spleen, liver, adrenal, heart and lung (at protein level).

It localises to the nucleus. Binds a variety of cellular and viral promoters including fibrinogen, alpha-globin, SV40 and HIV-1 promoters. Activation of the alpha-globin promoter in erythroid cells is via synergistic interaction with UBP1. Functions as part of the SSP (stage selector protein) complex. Facilitates the interaction of the gamma-globin genes with enhancer elements contained in the locus control region in fetal erythroid cells. Interacts by binding to the stage selector element (SSE) in the proximal gamma-globin promoter. This is Alpha-globin transcription factor CP2 (TFCP2) from Homo sapiens (Human).